The sequence spans 167 residues: Biogenesis of lysosome-related organelles complex 1 subunit 6 (167 aa).

Residues 1–11 are compositionally biased toward polar residues; that stretch reads MLKSSNINSVL. The segment at 1–38 is disordered; the sequence is MLKSSNINSVLNELPNDPARDSTAQSSHNGKPKQDAET. Positions 102–160 form a coiled coil; sequence ARLNDMMSDVKRYKDKLTKIKKEMQGVYQRTKELKKRAANVAACKQRDYQRKLERLQHE.

The protein belongs to the BLOC1S6 family. As to quaternary structure, component of the biogenesis of lysosome-related organelles complex-1 (BLOC-1) composed of Blos1, Blos2, Blos3, Blos4, Dysb, Muted, Pldn and Snapin. Interacts with Blos1, Blos4 and Dysb.

It localises to the synapse. Its subcellular location is the cytoplasm. The protein resides in the cytoskeleton. It is found in the myofibril. The protein localises to the sarcomere. It localises to the z line. Component of the biogenesis of lysosome-related organelles complex-1 (BLOC-1) involved in pigment granule biogenesis and membrane trafficking in synapses. In response to high synaptic activity at neuromuscular junctions, plays a key role in promoting efficient synaptic vesicle recycling and re-formation through early endosomes. This is Biogenesis of lysosome-related organelles complex 1 subunit 6 from Drosophila melanogaster (Fruit fly).